Here is a 150-residue protein sequence, read N- to C-terminus: Arginine repressor (150 aa).

It belongs to the ArgR family.

It localises to the cytoplasm. It participates in amino-acid biosynthesis; L-arginine biosynthesis [regulation]. Regulates arginine biosynthesis genes. The polypeptide is Arginine repressor (Symbiobacterium thermophilum (strain DSM 24528 / JCM 14929 / IAM 14863 / T)).